The primary structure comprises 533 residues: Solute carrier family 2, facilitated glucose transporter member 2 (533 aa).

At 1 to 17 (MDGKSKMQAEKHLTGTL) the chain is on the cytoplasmic side. The helical transmembrane segment at 18-38 (VLSVFTAVLGFFQYGYSLGVI) threads the bilayer. The Extracellular portion of the chain corresponds to 39–110 (NAPQKVIEAH…SPHILTMYWS (72 aa)). 2 N-linked (GlcNAc...) asparagine glycosylation sites follow: asparagine 64 and asparagine 69. A helical membrane pass occupies residues 111 to 131 (LSVSMFAVGGMVSSFTVGWIG). At 132-136 (DRLGR) the chain is on the cytoplasmic side. The chain crosses the membrane as a helical span at residues 137 to 157 (VKAMLVVNVLSIAGNLLMGLA). The Extracellular segment spans residues 158–163 (KMGPSH). A helical membrane pass occupies residues 164–184 (ILIIAGRAITGLYCGLSSGLV). Over 185-199 (PMYVSEVSPTALRGA) the chain is Cytoplasmic. The chain crosses the membrane as a helical span at residues 200-220 (LGTLHQLAIVTGILISQVLGL). Glutamine 205 contributes to the D-glucose binding site. The Extracellular portion of the chain corresponds to 221 to 229 (DFLLGNDEL). A helical membrane pass occupies residues 230-250 (WPLLLGLSGVAALLQFFLLLL). Over 251–315 (CPESPRYLYI…LFSSSKYRQA (65 aa)) the chain is Cytoplasmic. Residues 316–336 (VIVALMVQISQQFSGINAIFY) traverse the membrane as a helical segment. Residues 326–327 (QQ) and asparagine 332 each bind D-glucose. Residues 337 to 350 (YSTNIFQRAGVGQP) lie on the Extracellular side of the membrane. Residues 351 to 371 (VYATIGVGVVNTVFTVISVFL) traverse the membrane as a helical segment. Position 361 (asparagine 361) interacts with D-glucose. The Cytoplasmic portion of the chain corresponds to 372 to 379 (VEKAGRRS). Residues 380 to 400 (LFLAGLMGMLISAVAMTVGLV) traverse the membrane as a helical segment. Over 401–413 (LLSQFAWMSYVSM) the chain is Extracellular. Residues 414 to 434 (VAIFLFVIFFEVGPGPIPWFI) form a helical membrane-spanning segment. D-glucose-binding residues include glutamate 424 and tryptophan 432. Residues 435–445 (VAELFSQGPRP) are Cytoplasmic-facing. A helical membrane pass occupies residues 446–466 (AAIAVAGFCNWACNFIVGMCF). The Extracellular portion of the chain corresponds to 467 to 471 (QYIAD). The chain crosses the membrane as a helical span at residues 472–492 (LCGPYVFVVFAVLLLVFFLFA). Residues 493 to 533 (YLKVPETKGKSFEEIAAAFRRKKLPAKSMTELEDLRGGEEA) lie on the Cytoplasmic side of the membrane.

It belongs to the major facilitator superfamily. Sugar transporter (TC 2.A.1.1) family. Glucose transporter subfamily.

The protein localises to the cell membrane. The catalysed reaction is D-glucose(out) = D-glucose(in). It carries out the reaction D-fructose(out) = D-fructose(in). The enzyme catalyses L-dehydroascorbate(out) = L-dehydroascorbate(in). It catalyses the reaction D-galactose(in) = D-galactose(out). With respect to regulation, D-glucose and maltose competitively inhibit fructose transport. D-glucose, D-fructose and maltose inhibit deoxyglucose transport. Facilitative hexose transporter that mediates the transport of glucose, fructose and galactose. Likely mediates the bidirectional transfer of glucose across the plasma membrane of hepatocytes and is responsible for uptake of glucose by the beta cells. This Gallus gallus (Chicken) protein is Solute carrier family 2, facilitated glucose transporter member 2.